The following is a 136-amino-acid chain: Small ribosomal subunit protein uS12 (136 aa).

Asp-89 bears the 3-methylthioaspartic acid mark. The segment at 104–136 (TAGVNGRTQRRSKYGAKRPKPGQAAAAAKGKKK) is disordered. The span at 111–123 (TQRRSKYGAKRPK) shows a compositional bias: basic residues. Residues 124–136 (PGQAAAAAKGKKK) are compositionally biased toward low complexity.

It belongs to the universal ribosomal protein uS12 family. As to quaternary structure, part of the 30S ribosomal subunit. Contacts proteins S8 and S17. May interact with IF1 in the 30S initiation complex.

Its function is as follows. With S4 and S5 plays an important role in translational accuracy. In terms of biological role, interacts with and stabilizes bases of the 16S rRNA that are involved in tRNA selection in the A site and with the mRNA backbone. Located at the interface of the 30S and 50S subunits, it traverses the body of the 30S subunit contacting proteins on the other side and probably holding the rRNA structure together. The combined cluster of proteins S8, S12 and S17 appears to hold together the shoulder and platform of the 30S subunit. This is Small ribosomal subunit protein uS12 from Parabacteroides distasonis (strain ATCC 8503 / DSM 20701 / CIP 104284 / JCM 5825 / NCTC 11152).